Here is a 188-residue protein sequence, read N- to C-terminus: Large ribosomal subunit protein uL6 (188 aa).

The protein belongs to the universal ribosomal protein uL6 family. In terms of assembly, part of the 50S ribosomal subunit.

This protein binds to the 23S rRNA, and is important in its secondary structure. It is located near the subunit interface in the base of the L7/L12 stalk, and near the tRNA binding site of the peptidyltransferase center. This chain is Large ribosomal subunit protein uL6, found in Myxococcus xanthus (strain DK1622).